Consider the following 47-residue polypeptide: Heat shock protein HSP 90 (47 aa).

The protein belongs to the heat shock protein 90 family. In terms of assembly, homodimer.

Its subcellular location is the cytoplasm. Putative molecular chaperone that may promote the maturation, structural maintenance and proper regulation of specific target proteins. This Oryctolagus cuniculus (Rabbit) protein is Heat shock protein HSP 90.